The primary structure comprises 539 residues: E3 ubiquitin-protein ligase arc-1 (539 aa).

Residues 6–53 form an RING-type zinc finger; it reads CNVCNEEYSARDPLKCPRVLTGCGHTICHNCAISIAGRNSSIFCPFDR. The B box-type zinc finger occupies 103–149; that stretch reads LLNLECDEDSEHVAVIYCTVCDSNLCERCSESTHSTNVLSKHRRIPL. Residues 369–539 are ARF-like; sequence ESRVVLLGLD…LSRLNGTCPV (171 aa). GTP is bound by residues 376-383, 422-426, and 481-484; these read GLDGAGKT, DVGGL, and NRKD.

This sequence in the C-terminal section; belongs to the small GTPase superfamily. Arf family.

It catalyses the reaction S-ubiquitinyl-[E2 ubiquitin-conjugating enzyme]-L-cysteine + [acceptor protein]-L-lysine = [E2 ubiquitin-conjugating enzyme]-L-cysteine + N(6)-ubiquitinyl-[acceptor protein]-L-lysine.. Its pathway is protein modification; protein ubiquitination. Functionally, acts as an E3 ubiquitin-protein ligase. The chain is E3 ubiquitin-protein ligase arc-1 (arc-1) from Caenorhabditis elegans.